Here is a 284-residue protein sequence, read N- to C-terminus: MLSKQIPLGIYEKALPAGECWLERLRLAKTLGFDFVEMSVDETNERLSRLDWSRVQRLALVNAIVETGVRVPSMCLSAHRRFPLVSEDDAVRAQGLEIMRKAIQFAQDVGIRVIQLSGYDVYYQEANNETRRRFRDGLKESVEMASRAQVTLAMEIMDYPLMNSISKALGYAHYLNNPWFQLYPDIGNLSAWDNDVQMELQAGIGHIVAVHVKDTKPGVFKNVPFGEGVVDFERCFETLKQSGYCGPYLIEMWSETAEDPAAEVVKACDWVKARMAKAGMVEAA.

It belongs to the L-ribulose-5-phosphate 3-epimerase family.

It carries out the reaction L-ribulose 5-phosphate = L-xylulose 5-phosphate. The protein operates within cofactor degradation; L-ascorbate degradation; D-xylulose 5-phosphate from L-ascorbate: step 3/4. In terms of biological role, catalyzes the isomerization of L-xylulose-5-phosphate to L-ribulose-5-phosphate. Is involved in the anaerobic L-ascorbate utilization. In Shigella flexneri serotype 5b (strain 8401), this protein is L-ribulose-5-phosphate 3-epimerase UlaE.